We begin with the raw amino-acid sequence, 169 residues long: Peptide deformylase (169 aa).

Positions 91 and 133 each coordinate Fe cation. Glu134 is a catalytic residue. Residue His137 coordinates Fe cation.

Belongs to the polypeptide deformylase family. Fe(2+) serves as cofactor.

The enzyme catalyses N-terminal N-formyl-L-methionyl-[peptide] + H2O = N-terminal L-methionyl-[peptide] + formate. Functionally, removes the formyl group from the N-terminal Met of newly synthesized proteins. Requires at least a dipeptide for an efficient rate of reaction. N-terminal L-methionine is a prerequisite for activity but the enzyme has broad specificity at other positions. The protein is Peptide deformylase of Enterobacter sp. (strain 638).